A 373-amino-acid chain; its full sequence is Glutamine synthetase (373 aa).

Residue alanine 2 is modified to N-acetylalanine. Positions 2-25 are required for glutamine-induced ubiquitination by CRL4(CRBN) and proteasomal degradation; the sequence is ATSASSHLNKGIKQVYMSLPQGEK. N6-acetyllysine is present on residues lysine 11 and lysine 14. The GS beta-grasp domain maps to 24 to 106; sequence EKVQAMYIWI…VFCEVFKYNR (83 aa). Residue tyrosine 104 is modified to Phosphotyrosine. The region spanning 113–373 is the GS catalytic domain; the sequence is LRHTCKRIMD…TGDEPFQYKN (261 aa). Glutamate 134 contacts ATP. Residues glutamate 134, glutamate 136, glutamate 196, and glutamate 203 each contribute to the Mn(2+) site. 203–208 contributes to the ATP binding site; the sequence is EFQIGP. An L-glutamate-binding site is contributed by 246-247; that stretch reads NW. Histidine 253 provides a ligand contact to Mn(2+). ATP contacts are provided by residues 255-257, arginine 319, and arginine 324; that span reads NFS. L-glutamate is bound at residue arginine 319. 336-338 is an ADP binding site; the sequence is YFE. Glutamate 338 is a binding site for Mn(2+). Arginine 340 is a binding site for L-glutamate. A Phosphoserine modification is found at serine 343.

Belongs to the glutamine synthetase family. As to quaternary structure, decamer; composed of two pentamers. Interacts with PALMD. Interacts with RHOJ. Interacts with BEST2; this interaction tethers a fraction of GLUL to the membrane, causing a decrease of cytosolic glutamine synthase (GS) activity and inhibits the chloride channel activity of BEST2 by affecting the gating at the aperture in the absence of intracellular glutamate. It depends on Mg(2+) as a cofactor. Requires Mn(2+) as cofactor. In terms of processing, palmitoylated; undergoes autopalmitoylation. Acetylated by EP300/p300; acetylation is stimulated by increased glutamine levels and promotes ubiquitin-mediated proteasomal degradation. Post-translationally, ubiquitinated by ZNRF1. Ubiquitinated by the DCX (DDB1-CUL4-X-box) E3 ubiquitin-protein ligase complex called CRL4(CRBN), leading to proteasomal degradation.

The protein resides in the cytoplasm. Its subcellular location is the cytosol. The protein localises to the microsome. It localises to the mitochondrion. It is found in the cell membrane. It carries out the reaction L-glutamate + NH4(+) + ATP = L-glutamine + ADP + phosphate + H(+). The catalysed reaction is L-cysteinyl-[protein] + hexadecanoyl-CoA = S-hexadecanoyl-L-cysteinyl-[protein] + CoA. Its activity is regulated as follows. Glutamine synthetase activity is inhibited by methionine sulfoximine (MSO). Functionally, glutamine synthetase that catalyzes the ATP-dependent conversion of glutamate and ammonia to glutamine. Its role depends on tissue localization: in the brain, it regulates the levels of toxic ammonia and converts neurotoxic glutamate to harmless glutamine, whereas in the liver, it is one of the enzymes responsible for the removal of ammonia. Plays a key role in ammonium detoxification during erythropoiesis: the glutamine synthetase activity is required to remove ammonium generated by porphobilinogen deaminase (HMBS) during heme biosynthesis to prevent ammonium accumulation and oxidative stress. Essential for proliferation of fetal skin fibroblasts. Independently of its glutamine synthetase activity, required for endothelial cell migration during vascular development. Involved in angiogenesis by regulating membrane localization and activation of the GTPase RHOJ, possibly by promoting RHOJ palmitoylation. May act as a palmitoyltransferase for RHOJ: able to autopalmitoylate and then transfer the palmitoyl group to RHOJ. Plays a role in ribosomal 40S subunit biogenesis. Through the interaction with BEST2, inhibits BEST2 channel activity by affecting the gating at the aperture in the absence of intracellular L-glutamate, but sensitizes BEST2 to intracellular L-glutamate, which promotes the opening of BEST2 and thus relieves its inhibitory effect on BEST2. The polypeptide is Glutamine synthetase (Canis lupus familiaris (Dog)).